We begin with the raw amino-acid sequence, 341 residues long: N-acetyl-gamma-glutamyl-phosphate reductase (341 aa).

Residue Cys163 is part of the active site.

It belongs to the NAGSA dehydrogenase family. Type 1 subfamily.

It localises to the cytoplasm. The enzyme catalyses N-acetyl-L-glutamate 5-semialdehyde + phosphate + NADP(+) = N-acetyl-L-glutamyl 5-phosphate + NADPH + H(+). The protein operates within amino-acid biosynthesis; L-arginine biosynthesis; N(2)-acetyl-L-ornithine from L-glutamate: step 3/4. In terms of biological role, catalyzes the NADPH-dependent reduction of N-acetyl-5-glutamyl phosphate to yield N-acetyl-L-glutamate 5-semialdehyde. In Idiomarina loihiensis (strain ATCC BAA-735 / DSM 15497 / L2-TR), this protein is N-acetyl-gamma-glutamyl-phosphate reductase.